The chain runs to 388 residues: Mannitol-1-phosphate 5-dehydrogenase (388 aa).

4–15 (AVHFGAGNIGRG) provides a ligand contact to NAD(+).

Belongs to the mannitol dehydrogenase family.

The enzyme catalyses D-mannitol 1-phosphate + NAD(+) = beta-D-fructose 6-phosphate + NADH + H(+). The protein is Mannitol-1-phosphate 5-dehydrogenase of Thermoanaerobacter pseudethanolicus (strain ATCC 33223 / 39E) (Clostridium thermohydrosulfuricum).